A 30-amino-acid chain; its full sequence is Cycloviolacin-O7 (30 aa).

A cross-link (cyclopeptide (Ser-Asn)) is located at residues 1-30 (SIPCGESCVWIPCTITALAGCKCKSKVCYN). 3 disulfides stabilise this stretch: C4-C21, C8-C23, and C13-C28.

Post-translationally, this is a cyclic peptide.

Its function is as follows. Probably participates in a plant defense mechanism. In Viola odorata (Sweet violet), this protein is Cycloviolacin-O7.